The chain runs to 487 residues: L-asparagine permease 2 (487 aa).

Helical transmembrane passes span 26–46 (QLQM…GAGG), 50–70 (SAGP…FLIL), 98–118 (VAFV…IVDT), 133–153 (PIPQ…MNLI), 163–183 (FWAS…GTVF), 214–234 (IVLV…VGIA), 256–276 (IACF…YTAY), 290–310 (IGID…ALSS), 341–361 (TGVP…GIIL), 369–389 (AFEI…ATIV), 414–434 (SPFS…LMYF), and 440–460 (PWMI…WYLV).

This sequence belongs to the amino acid-polyamine-organocation (APC) superfamily. Amino acid transporter (AAT) (TC 2.A.3.1) family.

The protein localises to the cell membrane. Dual function in both nitrogen assimilation and in protection against acid stress during infection. Involved in asparagine uptake. The protein is L-asparagine permease 2 (ansP2) of Mycobacterium bovis (strain ATCC BAA-935 / AF2122/97).